The chain runs to 331 residues: Phosphoribosylformylglycinamidine cyclo-ligase (331 aa).

This sequence belongs to the AIR synthase family.

It is found in the cytoplasm. It catalyses the reaction 2-formamido-N(1)-(5-O-phospho-beta-D-ribosyl)acetamidine + ATP = 5-amino-1-(5-phospho-beta-D-ribosyl)imidazole + ADP + phosphate + H(+). Its pathway is purine metabolism; IMP biosynthesis via de novo pathway; 5-amino-1-(5-phospho-D-ribosyl)imidazole from N(2)-formyl-N(1)-(5-phospho-D-ribosyl)glycinamide: step 2/2. The polypeptide is Phosphoribosylformylglycinamidine cyclo-ligase (Clostridium botulinum (strain Okra / Type B1)).